Reading from the N-terminus, the 80-residue chain is Secreted transmembrane peptide 3 (80 aa).

The signal sequence occupies residues 1–27 (MGLKMSSNALLLSLFLLLLCLFSEIGG). Residues 44–80 (IATPPSLTCGGQRLGGPQPRLSPCPRPRPRPRPRTGS) form a disordered region. The SCOOP motif signature appears at 62-80 (PRLSPCPRPRPRPRPRTGS). Residues 70–80 (PRPRPRPRTGS) are compositionally biased toward basic residues.

Belongs to the serine rich endogenous peptide (SCOOP) phytocytokine family. Interacts with MIK2 (via extracellular leucine-rich repeat domain); this interaction triggers the formation of complex between MIK2 and the BAK1/SERK3 and SERK4 coreceptors, and subsequent BAK1 activation by phosphorylation. In terms of tissue distribution, mostly expressed in leaves, and, to a lower extent, in roots, stems, siliques, seeds and flowers.

It is found in the cell membrane. The protein localises to the secreted. The protein resides in the extracellular space. Its subcellular location is the apoplast. It localises to the endoplasmic reticulum. It is found in the golgi apparatus. Functionally, brassicaceae-specific phytocytokine (plant endogenous peptide released into the apoplast) perceived by MIK2 in a BAK1/SERK3 and SERK4 coreceptors-dependent manner, that modulates various physiological and antimicrobial processes including growth prevention and reactive oxygen species (ROS) response regulation. This Arabidopsis thaliana (Mouse-ear cress) protein is Secreted transmembrane peptide 3.